The chain runs to 146 residues: 3-dehydroquinate dehydratase (146 aa).

The Proton acceptor role is filled by Tyr-22. The substrate site is built by Asn-73, His-79, and Asp-86. His-99 functions as the Proton donor in the catalytic mechanism. Residues 100–101 (LS) and Arg-110 contribute to the substrate site.

This sequence belongs to the type-II 3-dehydroquinase family. In terms of assembly, homododecamer.

It carries out the reaction 3-dehydroquinate = 3-dehydroshikimate + H2O. The protein operates within metabolic intermediate biosynthesis; chorismate biosynthesis; chorismate from D-erythrose 4-phosphate and phosphoenolpyruvate: step 3/7. Its function is as follows. Catalyzes a trans-dehydration via an enolate intermediate. The protein is 3-dehydroquinate dehydratase of Synechococcus sp. (strain CC9605).